The primary structure comprises 550 residues: CCR4-NOT transcription complex subunit 6-like-A (550 aa).

Positions 1 to 148 are required for interaction with cnot1, cnot3 and cnot7; it reads MPKEKYDPPD…LYQEPDGMRK (148 aa). 4 LRR repeats span residues 52–73, 75–96, 98–120, and 121–143; these read HLTVLHLSDNNLSRIPPDIAKL, NLVYLDLSSNKLRSLPAELGNV, SLRELLLNNNLLRVLPFELGRLF, and RLQTLGLKGNPLSQDILSLYQEP. The segment at 153 to 550 is nuclease domain; sequence MLDNLSVHPE…INGVHLPSRR (398 aa). E235 contributes to the Mg(2+) binding site. Residues E235, E271, H355, and P360 each coordinate substrate. D405 serves as a coordination point for Mg(2+). Residue D405 is the Proton donor/acceptor of the active site. Positions 407, 474, and 479 each coordinate substrate.

It belongs to the CCR4/nocturin family. Component of the CCR4-NOT complex. Mg(2+) serves as cofactor.

Its subcellular location is the cytoplasm. The protein resides in the nucleus. The enzyme catalyses Exonucleolytic cleavage of poly(A) to 5'-AMP.. In terms of biological role, poly(A) nuclease with 3'-5' RNase activity. Catalytic component of the CCR4-NOT complex which is one of the major cellular mRNA deadenylases and is linked to various cellular processes including bulk mRNA degradation, miRNA-mediated repression, translational repression during translational initiation and general transcription regulation. Additional complex functions may be a consequence of its influence on mRNA expression. The polypeptide is CCR4-NOT transcription complex subunit 6-like-A (cnot6l-a) (Xenopus laevis (African clawed frog)).